Reading from the N-terminus, the 330-residue chain is Phenylalanine--tRNA ligase alpha subunit (330 aa).

Residue E254 coordinates Mg(2+).

It belongs to the class-II aminoacyl-tRNA synthetase family. Phe-tRNA synthetase alpha subunit type 1 subfamily. Tetramer of two alpha and two beta subunits. It depends on Mg(2+) as a cofactor.

The protein localises to the cytoplasm. The enzyme catalyses tRNA(Phe) + L-phenylalanine + ATP = L-phenylalanyl-tRNA(Phe) + AMP + diphosphate + H(+). This Neisseria meningitidis serogroup A / serotype 4A (strain DSM 15465 / Z2491) protein is Phenylalanine--tRNA ligase alpha subunit (pheS).